Reading from the N-terminus, the 158-residue chain is Biotin carboxyl carrier protein of acetyl-CoA carboxylase (158 aa).

The 77-residue stretch at 81 to 157 (YATIVSPMVG…DCGQALMKVE (77 aa)) folds into the Biotinyl-binding domain. An N6-biotinyllysine modification is found at Lys123.

Its subcellular location is the plastid. It is found in the chloroplast. It participates in lipid metabolism; fatty acid biosynthesis. Its function is as follows. This protein is a component of the acetyl coenzyme A carboxylase complex; first, biotin carboxylase catalyzes the carboxylation of the carrier protein and then the transcarboxylase transfers the carboxyl group to form malonyl-CoA. The sequence is that of Biotin carboxyl carrier protein of acetyl-CoA carboxylase (accB) from Pyropia yezoensis (Susabi-nori).